A 212-amino-acid chain; its full sequence is Prohead core protein protease (212 aa).

The active site involves His-85. A homomultimerization region spans residues 117–136 (IEGDHGPGDKLAANIRAGWI). Ser-140 is an active-site residue. Positions 207-212 (AMKKAL) are excised as a propeptide.

Belongs to the peptidase U9 family. Homopentamer. In terms of processing, the self-cleavage of the N-terminus allows the activation of the protease. Probably also self-cleaved at the C-terminus in order to detach the protease from the scaffold protein and allow it to diffuse within the prohead to cleave the prohead proteins. After cleavage of the inner core of the prohead, the gp21 protease also destroys itself into small cleavage products.

Its function is as follows. Serine protease ot the inner core, which is activated by autocatalytic cleavage after completion of prohead assembly and processes many prohead proteins. These cleaved peptides from the inner core and the auto-cleaved protease escape from the capsid, thus liberating space for the phage DNA genome. Cleaves the prohead proteins after the sequence motif L/I-X-E. This chain is Prohead core protein protease (21), found in Escherichia coli (Bacteriophage T4).